We begin with the raw amino-acid sequence, 39 residues long: Omega-theraphotoxin-Asp1a (39 aa).

3 disulfide bridges follow: C4–C25, C8–C31, and C17–C36.

In terms of tissue distribution, expressed by the venom gland.

Its subcellular location is the secreted. Toxin that inhibits voltage-gated calcium channels in rat cerebellar granule cells (IC(50)&lt;200 nM). Is lethal to cockroaches. The chain is Omega-theraphotoxin-Asp1a from Aphonopelma sp. (American tarantula).